Here is a 338-residue protein sequence, read N- to C-terminus: Adenylosuccinate synthetase (338 aa).

GTP is bound by residues 12–18 (GDEGKGK) and 42–44 (GHT). Aspartate 13 serves as the catalytic Proton acceptor. Mg(2+)-binding residues include aspartate 13 and glycine 42. IMP is bound by residues 13 to 16 (DEGK), 40 to 43 (NAGH), threonine 127, arginine 141, glutamine 179, threonine 194, and arginine 256. Catalysis depends on histidine 43, which acts as the Proton donor. 252–258 (TVTGRRR) contacts substrate. Residues arginine 258, 284–286 (CLD), and 324–326 (STG) each bind GTP.

The protein belongs to the adenylosuccinate synthetase family. In terms of assembly, homodimer. Mg(2+) serves as cofactor.

Its subcellular location is the cytoplasm. The catalysed reaction is IMP + L-aspartate + GTP = N(6)-(1,2-dicarboxyethyl)-AMP + GDP + phosphate + 2 H(+). Its pathway is purine metabolism; AMP biosynthesis via de novo pathway; AMP from IMP: step 1/2. Plays an important role in the de novo pathway of purine nucleotide biosynthesis. Catalyzes the first committed step in the biosynthesis of AMP from IMP. This chain is Adenylosuccinate synthetase, found in Methanococcus maripaludis (strain DSM 14266 / JCM 13030 / NBRC 101832 / S2 / LL).